The chain runs to 886 residues: MENKNKKCLRTLLLLALFLGLLEDGKTALIAPNSQQIFKLQNQVILQELGRDSSSAETSYTFETDLKINSVWSGDEDQLLEVFISGSKVDASGKARSITRIPDRPFYISLVRGQPDKVIAHTSKDQSLLNLERGIASLLQLRLDASQEEELDVSGLCRVSYNVKSSTKVEKTKRDCSLWDLRVNYNPEEALGVTQQAQETVFYELSSEGTLLHAESQENHRLNLAAKPDVGSFVKSSLILQHVSQGSEEVKQLQLGSLDKAIQSLLEWYRVFELESDVDGMISAIKEQTLEDQLKASLTELQSADVGKSSLALAYVKLIPLARITRQEQFEDLLTEHAEVLPQLVDLLGAVQTFDAHNATFGFLYKESETTSEQLDLLEKYLQSLAVATHPDRKIVEHLFGLLEQESIKKHLKLRESVIQTVATLTRQSGLDVEDPLLKEVRSYLLQGLTSKEPTLYIRALQNLQDPATIEALLEHAQTGEAPNLSVAALQALKAFPLGSFNSSHRLQFESIFYQRKRRFDSSARTLALDIILSLRPTQEQLGNFLDYLASNDRQFEIKTYVLQKLRMLAEKCPRFRALFKSELVKRRHVNNYNVLGQKGLTTVLTRQLSQAPAFNETLLSTQEVYQGILKRGSVEFLLHAGRSQASSFKLGIYTAGLGSLVGDGDSGDGNDAIPADDEFSEDEAVTAGMEISVQGAQLRPLVFFSGQTELMGHVWGGSASDSTPAYQATTLSQDNEHYIILTSGATLHWRVLGARSVDLNGKVGFSLWNRNAQTEIQQNTGSAVLGHLAVGFTYAKLVQDFSITHEPKLSLNADLDFYSGIKLCMQLQRPEQLLKQTNVRSVFLQSVDRPYAKHVRSTLSHKTAGCTFALNQKNNEMCNLIFRDL.

A signal peptide spans 1–27 (MENKNKKCLRTLLLLALFLGLLEDGKT). The Vitellogenin domain maps to 30–653 (IAPNSQQIFK…SQASSFKLGI (624 aa)). 4 N-linked (GlcNAc...) asparagine glycosylation sites follow: Asn-358, Asn-484, Asn-502, and Asn-616.

It is found in the endoplasmic reticulum. The protein resides in the golgi apparatus. The enzyme catalyses a 1,2-diacyl-sn-glycero-3-phosphocholine(in) = a 1,2-diacyl-sn-glycero-3-phosphocholine(out). The catalysed reaction is a 1,2-diacyl-sn-glycero-3-phosphoethanolamine(in) = a 1,2-diacyl-sn-glycero-3-phosphoethanolamine(out). Functionally, catalyzes the transport of phospholipids such as phosphatidylethanolamine (1,2-diacyl-sn-glycero-3-phosphoethanolamine) and phosphatidylcholine (1,2-diacyl-sn-glycero-3-phosphocholine) between membranes. Required for the assembly and secretion of plasma lipoproteins that contain apolipoprotein B. The polypeptide is Microsomal triacylglycerol transfer protein (Drosophila melanogaster (Fruit fly)).